A 468-amino-acid polypeptide reads, in one-letter code: MPAPTTTLLIEGTFTELADEFAQYIDALRKNEGASLQSEIAPLIEPLRQQEQSEEEPDRKQRDEVLKKLVGAAAVLNAAPEKEIISAYNLLVHLVHQASNPDMFLSRICTYLAKPITTSPQFGPTLAISILSTIFNTLAPTDSSRFHVLLAIVAVIRQSGSSYAFEALKPQLAAQLPTWLSAWELDDEDAQKLHLAVADAAQASGDLELAQTHVVQALQTIPANESSSKEARDLAVRALTSALKSPGVFDFTSLTAADAIQALRSSDSTLFELLEIFTADTLDAYEDFIAATPLETISGGVLADGAEALQTKMRLLTLASLAASTPSRSLPYATIASALRVPVEDVEKWVIDTIRAGLVEGKLSQLRSEFLVHRATYRVFGEKQWAEVQGRLMVWRRSLESVLGVLRTERERYIRESMQAAAEETGQGKSGDKGAKGGDRRRNPQQQQQSQPSQPQQAREVELVGGAE.

Residues 42–61 (PLIEPLRQQEQSEEEPDRKQ) are disordered. One can recognise a PCI domain in the interval 206–377 (DLELAQTHVV…SEFLVHRATY (172 aa)). A disordered region spans residues 418 to 468 (MQAAAEETGQGKSGDKGAKGGDRRRNPQQQQQSQPSQPQQAREVELVGGAE). Positions 430–442 (SGDKGAKGGDRRR) are enriched in basic and acidic residues. Over residues 444–457 (PQQQQQSQPSQPQQ) the composition is skewed to low complexity.

Belongs to the eIF-3 subunit M family. In terms of assembly, component of the eukaryotic translation initiation factor 3 (eIF-3) complex.

The protein resides in the cytoplasm. In terms of biological role, component of the eukaryotic translation initiation factor 3 (eIF-3) complex, which is involved in protein synthesis of a specialized repertoire of mRNAs and, together with other initiation factors, stimulates binding of mRNA and methionyl-tRNAi to the 40S ribosome. The eIF-3 complex specifically targets and initiates translation of a subset of mRNAs involved in cell proliferation. This Neosartorya fischeri (strain ATCC 1020 / DSM 3700 / CBS 544.65 / FGSC A1164 / JCM 1740 / NRRL 181 / WB 181) (Aspergillus fischerianus) protein is Eukaryotic translation initiation factor 3 subunit M.